The chain runs to 341 residues: MILLENVKKIYKAKSGDVTAVDNANLKIEKGEIFGVIGYSGAGKSSLIRLFNQLEKPTSGQITIANRVISAITGSELRKARQEIGMIFQHFNLLWSRTVRENIEFPLEIAGVDKAKRRKRVDELIHLVGLEGRGDAYPSQLSGGQKQRVGIARALANNPQVLLCDEATSALDPETTDQILDLLLDINKRLGLTIVLITHEMHVIRKICNRVAVMEKGKIVETGPVLDVFRNPKQDITKRFVQQLTDSEDTNETIESLIEKYPDGKVIRLQFIGEAVERPVLQRLMQRSDIEVSILQGNIAQTNNGSYGSLVVHLNGEETAIQQAIEGIHQDQVELEVIAHG.

Residues 2-241 (ILLENVKKIY…PKQDITKRFV (240 aa)) form the ABC transporter domain. 38–45 (GYSGAGKS) serves as a coordination point for ATP.

Belongs to the ABC transporter superfamily. Methionine importer (TC 3.A.1.24) family. In terms of assembly, the complex is composed of two ATP-binding proteins (MetN), two transmembrane proteins (MetI) and a solute-binding protein (MetQ).

The protein localises to the cell membrane. The enzyme catalyses L-methionine(out) + ATP + H2O = L-methionine(in) + ADP + phosphate + H(+). It catalyses the reaction D-methionine(out) + ATP + H2O = D-methionine(in) + ADP + phosphate + H(+). Part of the ABC transporter complex MetNIQ involved in methionine import. Responsible for energy coupling to the transport system. The sequence is that of Methionine import ATP-binding protein MetN 3 from Bacillus cereus (strain ATCC 14579 / DSM 31 / CCUG 7414 / JCM 2152 / NBRC 15305 / NCIMB 9373 / NCTC 2599 / NRRL B-3711).